We begin with the raw amino-acid sequence, 165 residues long: HTH-type transcriptional regulator IscR (165 aa).

Residues 2 to 131 enclose the HTH rrf2-type domain; the sequence is RLTSKGRYAV…NNITLAELVS (130 aa). The segment at residues 28 to 51 is a DNA-binding region (H-T-H motif); that stretch reads LAEISERQGISLSYLEQLFSRLRK. C92, C98, and C104 together coordinate [2Fe-2S] cluster. Residues 144–165 form a disordered region; the sequence is NDTRRPLTNGRPQETINVNLHA. A compositionally biased stretch (polar residues) spans 153–165; that stretch reads GRPQETINVNLHA.

[2Fe-2S] cluster is required as a cofactor.

In terms of biological role, regulates the transcription of several operons and genes involved in the biogenesis of Fe-S clusters and Fe-S-containing proteins. This chain is HTH-type transcriptional regulator IscR, found in Sodalis glossinidius (strain morsitans).